A 422-amino-acid chain; its full sequence is Gamma-glutamyl phosphate reductase (422 aa).

It belongs to the gamma-glutamyl phosphate reductase family.

It localises to the cytoplasm. It catalyses the reaction L-glutamate 5-semialdehyde + phosphate + NADP(+) = L-glutamyl 5-phosphate + NADPH + H(+). The protein operates within amino-acid biosynthesis; L-proline biosynthesis; L-glutamate 5-semialdehyde from L-glutamate: step 2/2. Its function is as follows. Catalyzes the NADPH-dependent reduction of L-glutamate 5-phosphate into L-glutamate 5-semialdehyde and phosphate. The product spontaneously undergoes cyclization to form 1-pyrroline-5-carboxylate. In Shewanella piezotolerans (strain WP3 / JCM 13877), this protein is Gamma-glutamyl phosphate reductase.